Here is a 435-residue protein sequence, read N- to C-terminus: Amidase 1 (435 aa).

Catalysis depends on charge relay system residues K38 and S115. S139 acts as the Acyl-ester intermediate in catalysis.

This sequence belongs to the amidase family.

It localises to the cytoplasm. It is found in the nucleus. The protein localises to the nucleoplasm. The enzyme catalyses a monocarboxylic acid amide + H2O = a monocarboxylate + NH4(+). In terms of biological role, amidase involved in auxin biosynthesis. Converts indole-3-acetamide (IAM) to indole-3-acetate, and phenyl-2-acetamide (PAM) to phenyl-2-acetate. Substrate preference is PAM &gt; IAM. The sequence is that of Amidase 1 from Oryza sativa subsp. japonica (Rice).